A 344-amino-acid chain; its full sequence is MSTSLSYRDAGVDIDAGDQLVENIKPFAKRTMRPEVLGDLGGFGALVEIGKKYKNPVLVSGTDGVGTKLKLAFDWDKHDTVGIDLVAMSVNDILVQGAEPLFFLDYFACGKLDVPRATDVIKGIAQGCEESGCALIGGETAEMPGMYPVGEYDLAGFAVGVVEKENVITGRSIGAGDVVLGLASNGAHSNGYSLIRKIIERDNPDLDAEFDNGKTLREAVIAPTRLYVKPILAALEKFTIKGMAHITGGGITENVPRVLPENTVAQIDAKSWELPKLFQWLQKAGNVETQEMYRTFNCGIGMVVIVAAEDADAVQGLLGEQGETVYRLGLIRERQGDEHQTQVA.

The protein belongs to the AIR synthase family.

It localises to the cytoplasm. The enzyme catalyses 2-formamido-N(1)-(5-O-phospho-beta-D-ribosyl)acetamidine + ATP = 5-amino-1-(5-phospho-beta-D-ribosyl)imidazole + ADP + phosphate + H(+). It participates in purine metabolism; IMP biosynthesis via de novo pathway; 5-amino-1-(5-phospho-D-ribosyl)imidazole from N(2)-formyl-N(1)-(5-phospho-D-ribosyl)glycinamide: step 2/2. In Neisseria meningitidis serogroup C (strain 053442), this protein is Phosphoribosylformylglycinamidine cyclo-ligase.